The following is an 803-amino-acid chain: Leucine--tRNA ligase (803 aa).

A 'HIGH' region motif is present at residues 40-51 (PYPSGAGLHVGH). A 'KMSKS' region motif is present at residues 575 to 579 (KMSKS). Position 578 (lysine 578) interacts with ATP.

It belongs to the class-I aminoacyl-tRNA synthetase family.

It localises to the cytoplasm. The catalysed reaction is tRNA(Leu) + L-leucine + ATP = L-leucyl-tRNA(Leu) + AMP + diphosphate. The polypeptide is Leucine--tRNA ligase (Listeria monocytogenes serovar 1/2a (strain ATCC BAA-679 / EGD-e)).